The chain runs to 241 residues: Methylthioribulose-1-phosphate dehydratase (241 aa).

Cys96 lines the substrate pocket. His114 and His116 together coordinate Zn(2+). The active-site Proton donor/acceptor is the Glu138. His194 is a Zn(2+) binding site.

It belongs to the aldolase class II family. MtnB subfamily. Homotetramer. Interacts with APAF1. May interact with CASP1. Zn(2+) serves as cofactor. Expressed in skeletal muscle (at protein level).

Its subcellular location is the cytoplasm. It carries out the reaction 5-(methylsulfanyl)-D-ribulose 1-phosphate = 5-methylsulfanyl-2,3-dioxopentyl phosphate + H2O. It functions in the pathway amino-acid biosynthesis; L-methionine biosynthesis via salvage pathway; L-methionine from S-methyl-5-thio-alpha-D-ribose 1-phosphate: step 2/6. Catalyzes the dehydration of methylthioribulose-1-phosphate (MTRu-1-P) into 2,3-diketo-5-methylthiopentyl-1-phosphate (DK-MTP-1-P). Functions in the methionine salvage pathway, which plays a key role in cancer, apoptosis, microbial proliferation and inflammation. May inhibit the CASP1-related inflammatory response (pyroptosis), the CASP9-dependent apoptotic pathway and the cytochrome c-dependent and APAF1-mediated cell death. The protein is Methylthioribulose-1-phosphate dehydratase of Mus musculus (Mouse).